We begin with the raw amino-acid sequence, 450 residues long: Phosphoglucosamine mutase (450 aa).

The active-site Phosphoserine intermediate is the serine 102. The Mg(2+) site is built by serine 102, aspartate 243, aspartate 245, and aspartate 247. Serine 102 carries the phosphoserine modification.

The protein belongs to the phosphohexose mutase family. The cofactor is Mg(2+). Activated by phosphorylation.

It carries out the reaction alpha-D-glucosamine 1-phosphate = D-glucosamine 6-phosphate. Its function is as follows. Catalyzes the conversion of glucosamine-6-phosphate to glucosamine-1-phosphate. The protein is Phosphoglucosamine mutase of Agrobacterium fabrum (strain C58 / ATCC 33970) (Agrobacterium tumefaciens (strain C58)).